Consider the following 510-residue polypeptide: Monocarboxylate transporter 14 (510 aa).

At 1-27 the chain is on the cytoplasmic side; sequence MYTSHEDIGYDFEDGPKDKKTLKPHPN. Helical transmembrane passes span 28 to 48, 74 to 94, 103 to 123, 127 to 147, 159 to 179, and 191 to 209; these read IDGGWAWMMVLSSFFVHILIM, WVSSLSMGITLIVGPFIGLFI, AIIGGLVNSLGWVLSAYAANV, FITFGVAAGLGSGMAYLPAVV, LAQGLSTTGTGFGTFLMTVLL, and AMLIQGAVSLNLCVCGALM. Residues 214–255 form a disordered region; the sequence is PGKNPNDPGEKDVRGLPAHSTESVKSTGQQGRTEEKDGGLGN. Residues 233 to 244 show a composition bias toward polar residues; that stretch reads STESVKSTGQQG. 6 helical membrane passes run 315 to 335, 353 to 373, 379 to 399, 408 to 428, 443 to 463, and 474 to 494; these read MFVAFIFWALFAYSSFVIPFI, FPLTSIIAIVHIFGKVILGVI, ISVWNVFLLANFTLVLSIFIL, LAVICALIGFSSGYFSLMPVV, GIIICANGISALLGPPFAGWI, and FYICGLLYMIGILFLLIQPCI. Residues 495–510 lie on the Cytoplasmic side of the membrane; it reads RIIEQSRRKYMDGAHV.

It belongs to the major facilitator superfamily. Monocarboxylate porter (TC 2.A.1.13) family.

Its subcellular location is the cell membrane. Proton-linked monocarboxylate transporter. May catalyze the transport of monocarboxylates across the plasma membrane. The sequence is that of Monocarboxylate transporter 14 (SLC16A14) from Homo sapiens (Human).